The chain runs to 278 residues: MEMLEEHRCFEGWQQRWRHDSSTLNCPMTFSIFLPPPRDHTPPPVLYWLSGLTCNDENFTIKAGAQRVAAELGIVLVMPDTSPRGEQVANDDGYDLGQGAGFYLNATQPPWATHYRMYDYLRDELPALVQSQFNVSDRCAISGHSMGGHGALIMALKNPGKYTSVSAFAPIVNPCSVPWGIKAFSSYLGEDKNAWLEWDSCALMYASNAQDAIPTLIDQGDNDQFLADQLQPAVLAEAARQKAWPMTLRIQPGYDHSYYFIASFIEDHLRFHAQYLLK.

Active-site charge relay system residues include serine 145, aspartate 223, and histidine 256.

Belongs to the esterase D family.

The catalysed reaction is S-formylglutathione + H2O = formate + glutathione + H(+). In terms of biological role, serine hydrolase involved in the detoxification of formaldehyde. Hydrolyzes S-formylglutathione to glutathione and formate. In Escherichia coli O139:H28 (strain E24377A / ETEC), this protein is S-formylglutathione hydrolase YeiG (yeiG).